A 307-amino-acid polypeptide reads, in one-letter code: Ribosomal RNA small subunit methyltransferase H (307 aa).

Residues Gly38–His40, Asp58, Phe82, Asp99, and Gln106 each bind S-adenosyl-L-methionine.

This sequence belongs to the methyltransferase superfamily. RsmH family.

It is found in the cytoplasm. It carries out the reaction cytidine(1402) in 16S rRNA + S-adenosyl-L-methionine = N(4)-methylcytidine(1402) in 16S rRNA + S-adenosyl-L-homocysteine + H(+). In terms of biological role, specifically methylates the N4 position of cytidine in position 1402 (C1402) of 16S rRNA. In Variovorax paradoxus (strain S110), this protein is Ribosomal RNA small subunit methyltransferase H.